Reading from the N-terminus, the 543-residue chain is Chaperonin GroEL 4 (543 aa).

Residues 29 to 32 (TLGP), 86 to 90 (DGTTT), Gly-411, 476 to 478 (DAA), and Asp-492 contribute to the ATP site.

It belongs to the chaperonin (HSP60) family. In terms of assembly, forms a cylinder of 14 subunits composed of two heptameric rings stacked back-to-back. Interacts with the co-chaperonin GroES.

The protein resides in the cytoplasm. It carries out the reaction ATP + H2O + a folded polypeptide = ADP + phosphate + an unfolded polypeptide.. Its function is as follows. Together with its co-chaperonin GroES, plays an essential role in assisting protein folding. The GroEL-GroES system forms a nano-cage that allows encapsulation of the non-native substrate proteins and provides a physical environment optimized to promote and accelerate protein folding. This Bradyrhizobium diazoefficiens (strain JCM 10833 / BCRC 13528 / IAM 13628 / NBRC 14792 / USDA 110) protein is Chaperonin GroEL 4.